Consider the following 345-residue polypeptide: Alpha-N-acetylneuraminide alpha-2,8-sialyltransferase (345 aa).

Over 1–15 (MKLQGSRMWLCPRTR) the chain is Cytoplasmic. The chain crosses the membrane as a helical; Signal-anchor for type II membrane protein span at residues 16 to 36 (LPVGASALGFLILCWLYVFPG). Over 37-345 (YRLPGHKEMV…KKDVSSQKPH (309 aa)) the chain is Lumenal. Asn-59 and Asn-107 each carry an N-linked (GlcNAc...) asparagine glycan. 2 disulfide bridges follow: Cys-126/Cys-275 and Cys-140/Cys-335. The CMP-N-acetyl-beta-neuraminate site is built by Asn-131 and Asn-154. Residues Asn-154 and 176 to 178 (NPS) contribute to the substrate site. Asn-233 carries an N-linked (GlcNAc...) asparagine glycan. Positions 262, 263, 264, 284, and 298 each coordinate CMP-N-acetyl-beta-neuraminate. Residue 262-264 (STG) participates in substrate binding. The active-site Proton donor/acceptor is the His-310.

This sequence belongs to the glycosyltransferase 29 family.

The protein localises to the golgi apparatus membrane. It carries out the reaction an N-acetyl-alpha-neuraminyl-(2-&gt;3)-beta-D-galactosyl derivative + CMP-N-acetyl-beta-neuraminate = an N-acetyl-alpha-neuraminyl-(2-&gt;8)-N-acetyl-alpha-neuraminyl-(2-&gt;3)-beta-D-galactosyl derivative + CMP + H(+). The catalysed reaction is a ganglioside GM3 (d18:1(4E)) + CMP-N-acetyl-beta-neuraminate = a ganglioside GD3 (d18:1(4E)) + CMP + H(+). It catalyses the reaction a ganglioside GD3 (d18:1(4E)) + CMP-N-acetyl-beta-neuraminate = a ganglioside GT3 (d18:1(4E)) + CMP + H(+). The enzyme catalyses a ganglioside GD1a (d18:1(4E)) + CMP-N-acetyl-beta-neuraminate = a ganglioside GT1a (d18:1(4E)) + CMP + H(+). It carries out the reaction a ganglioside GT1b (d18:1(4E)) + CMP-N-acetyl-beta-neuraminate = a ganglioside GQ1b (d18:1(4E)) + CMP + H(+). The catalysed reaction is a ganglioside GM1b (d18:1(4E)) + CMP-N-acetyl-beta-neuraminate = a ganglioside GD1c (d18:1(4E)) + CMP + H(+). It catalyses the reaction a ganglioside GD3 + CMP-N-acetyl-beta-neuraminate = a ganglioside GT3 + CMP + H(+). The enzyme catalyses [alpha-N-acetylneuraminyl-(2-&gt;8)](n)-alpha-N-acetylneuraminyl-(2-&gt;8)-alpha-N-acetylneuraminyl-(2-&gt;3)-beta-D-galactosyl-(1-&gt;4)-beta-D-glucosyl-(1&lt;-&gt;1)-ceramide + CMP-N-acetyl-beta-neuraminate = [alpha-N-acetylneuraminyl-(2-&gt;8)](n+1)-alpha-N-acetylneuraminyl-(2-&gt;8)-alpha-N-acetylneuraminyl-(2-&gt;3)-beta-D-galactosyl-(1-&gt;4)-beta-D-glucosyl-(1&lt;-&gt;1)-ceramide + CMP + H(+). The protein operates within protein modification; protein glycosylation. It functions in the pathway lipid metabolism; sphingolipid metabolism. Catalyzes the addition of sialic acid in alpha 2,8-linkage to the sialic acid moiety of the ganglioside GM3 to form ganglioside GD3; gangliosides are a subfamily of complex glycosphingolipds that contain one or more residues of sialic acid. Glycosphingolipids are required for convergence extension movements during early development. Can catalyze the addition of a second alpha-2,8- sialic acid to GD3 to form GT3. Can use GM1b, GD1a and GT1b as acceptor substrates to synthesize GD1c, GT1a and GQ1b respectively. This is Alpha-N-acetylneuraminide alpha-2,8-sialyltransferase from Xenopus tropicalis (Western clawed frog).